We begin with the raw amino-acid sequence, 93 residues long: MARVTVEDAVNKIGNRFDMILVAARRARQIAVQGKDPMVEEENDKPTVIALREIELGLVTADTLDADERQTVREREAAEIAAVAAIAEGRNAI.

The protein belongs to the RNA polymerase subunit omega family. As to quaternary structure, the RNAP catalytic core consists of 2 alpha, 1 beta, 1 beta' and 1 omega subunit. When a sigma factor is associated with the core the holoenzyme is formed, which can initiate transcription.

The enzyme catalyses RNA(n) + a ribonucleoside 5'-triphosphate = RNA(n+1) + diphosphate. In terms of biological role, promotes RNA polymerase assembly. Latches the N- and C-terminal regions of the beta' subunit thereby facilitating its interaction with the beta and alpha subunits. The polypeptide is DNA-directed RNA polymerase subunit omega (Shewanella piezotolerans (strain WP3 / JCM 13877)).